The sequence spans 364 residues: Popeye domain-containing protein 2 (364 aa).

N4 carries N-linked (GlcNAc...) asparagine glycosylation. 2 helical membrane passes run 37 to 57 and 77 to 97; these read LLLG…FGFL and IVLW…HLVY. The interval 276-333 is disordered; it reads ADAGPESEKGDEEVCEPAVSPPQATPTSLQQTPPCSTPPATTNFPAPPTRARLSRPDS. The segment covering 300–309 has biased composition (polar residues); sequence TPTSLQQTPP. T361 is subject to Phosphothreonine.

The protein belongs to the popeye family. Expressed predominantly in the heart and in the skeletal muscle.

The protein resides in the membrane. It is found in the cell membrane. Its subcellular location is the sarcolemma. In terms of biological role, important for the maintenance of cardiac function. Plays a regulatory function in heart rate dynamics mediated, at least in part, through cAMP-binding and, probably, by increasing cell surface expression of the potassium channel KCNK2 and enhancing current density. This chain is Popeye domain-containing protein 2 (POPDC2), found in Homo sapiens (Human).